A 405-amino-acid chain; its full sequence is L-rhamnonate dehydratase (405 aa).

Residues His33 and Arg59 each contribute to the substrate site. Mg(2+) contacts are provided by Asp226, Glu252, and Glu280. Catalysis depends on His329, which acts as the Proton acceptor. Glu349 is a substrate binding site.

Belongs to the mandelate racemase/muconate lactonizing enzyme family. RhamD subfamily. Homooctamer; tetramer of dimers. Mg(2+) serves as cofactor.

It catalyses the reaction L-rhamnonate = 2-dehydro-3-deoxy-L-rhamnonate + H2O. In terms of biological role, catalyzes the dehydration of L-rhamnonate to 2-keto-3-deoxy-L-rhamnonate (KDR). In Escherichia coli O45:K1 (strain S88 / ExPEC), this protein is L-rhamnonate dehydratase.